Reading from the N-terminus, the 591-residue chain is MPSRAGPKMDGSGGRVRLKAHYSGDIFITSVDAATTFEELCEEVRDMCGLHQHHPLTLKWVDSEGDPRTVSSQMELGEAFRLAGQHRDDGLILHVFPSTPEQPGMPCPGEDKSIYRRGARRWRKLYRANGHLFQAKRFNRRAYCGQCSERIWGLARQGYRCINCKLLVHKRCHGLVPLTCRRHMDSVMPSQEPPVADKSDDADLPSQETDGIAFISTRKQDSGQEDAEDLKPVIDGVDGIKISQGLGLQDFDLIRVIGRGSYAKVLLVRLKKNGQVYAMKVVKKELVHDDEDIDWVQTEKHVFEQASGNPFLVGLHSCFQTTSRLFLVIEYVNGGDLMFHMQRQRKLPEEHARFYAAEICIALNFLHERGIIYRDLKLDNVLLDADGHIKLTDYGMCKEGLGPGDTTSTFCGTPNYIAPEILRGEEYGFSVDWWALGVLMFEMMAGRSPFDIITDNPDMNTEDYLFQVILEKPIRIPRFLSVKASHVLKGFLNKDPKERLGCRPQTGFSDIKSHAFFRSIDWDLLEKKQALPPFQPQITDDYGLDNSDTQFTSEPVQLTPDDEDVIKRIDQSEFEGFEYINPLLLSTEESV.

The 84-residue stretch at 15–98 folds into the PB1 domain; it reads RVRLKAHYSG…DGLILHVFPS (84 aa). An interaction with SQSTM1 region spans residues 79–145; that stretch reads AFRLAGQHRD…KRFNRRAYCG (67 aa). Residues 130–180 form a Phorbol-ester/DAG-type zinc finger; that stretch reads GHLFQAKRFNRRAYCGQCSERIWGLARQGYRCINCKLLVHKRCHGLVPLTC. Residues 251–517 enclose the Protein kinase domain; sequence FDLIRVIGRG…FSDIKSHAFF (267 aa). Residues 257–265 and Lys280 each bind ATP; that span reads IGRGSYAKV. Residue Asp375 is the Proton acceptor of the active site. Position 409 is a phosphothreonine; by PDPK1 and PI3K (Thr409). The AGC-kinase C-terminal domain maps to 518–589; that stretch reads RSIDWDLLEK…INPLLLSTEE (72 aa). The residue at position 559 (Thr559) is a Phosphothreonine. Ser590 is modified (phosphoserine).

This sequence belongs to the protein kinase superfamily. AGC Ser/Thr protein kinase family. PKC subfamily. Interacts with PARD6A, PARD6B and PARD6G. Part of a complex with PARD3, PARD6A or PARD6B or PARD6G and CDC42 or RAC1. Interacts with ADAP1/CENTA1. Interacts directly with SQSTM1. Forms a ternary complex with SQSTM1 and KCNAB2. Forms another ternary complex with SQSTM1 and GABRR3. Forms a complex with SQSTM1 and MAP2K5. Interacts (via the protein kinase domain) with WWC1. Forms a tripartite complex with WWC1 and DDR1, but predominantly in the absence of collagen. Component of the Par polarity complex, composed of at least phosphorylated PRKCZ, PARD3 and TIAM1. Interacts with PDPK1 (via N-terminal region). Interacts with WDFY2 (via WD repeats 1-3). Interacts with VAMP2. Forms a complex with WDFY2 and VAMP2. Interacts with APPL1. Interacts with WWC1, WWC2 and WWC3. In terms of processing, CDH5 is required for its phosphorylation at Thr-409. Phosphorylated by protein kinase PDPK1; phosphorylation is inhibited by the apoptotic C-terminal cleavage product of PKN2. Phosphorylation at Thr-409 by PI3K activates the kinase.

It is found in the cytoplasm. The protein localises to the endosome. It localises to the cell junction. Its subcellular location is the membrane. The enzyme catalyses L-seryl-[protein] + ATP = O-phospho-L-seryl-[protein] + ADP + H(+). It catalyses the reaction L-threonyl-[protein] + ATP = O-phospho-L-threonyl-[protein] + ADP + H(+). With respect to regulation, atypical PKCs (PRKCI and PRKCZ) exhibit an elevated basal enzymatic activity (that may be due to the interaction with SMG1 or SQSTM1) and are not regulated by diacylglycerol, phosphatidylserine, phorbol esters or calcium ions. Two specific sites, Thr-409 (activation loop of the kinase domain) and Thr-559 (turn motif), need to be phosphorylated for its full activation. Phosphatidylinositol 3,4,5-trisphosphate might be a physiological activator. In terms of biological role, calcium- and diacylglycerol-independent serine/threonine-protein kinase that functions in phosphatidylinositol 3-kinase (PI3K) pathway and mitogen-activated protein (MAP) kinase cascade, and is involved in NF-kappa-B activation, mitogenic signaling, cell proliferation, cell polarity, inflammatory response and maintenance of long-term potentiation (LTP). Upon lipopolysaccharide (LPS) treatment in macrophages, or following mitogenic stimuli, functions downstream of PI3K to activate MAP2K1/MEK1-MAPK1/ERK2 signaling cascade independently of RAF1 activation. Required for insulin-dependent activation of AKT3, but may function as an adapter rather than a direct activator. Upon insulin treatment may act as a downstream effector of PI3K and contribute to the activation of translocation of the glucose transporter SLC2A4/GLUT4 and subsequent glucose transport in adipocytes. In EGF-induced cells, binds and activates MAP2K5/MEK5-MAPK7/ERK5 independently of its kinase activity and can activate JUN promoter through MEF2C. Through binding with SQSTM1/p62, functions in interleukin-1 signaling and activation of NF-kappa-B with the specific adapters RIPK1 and TRAF6. Participates in TNF-dependent transactivation of NF-kappa-B by phosphorylating and activating IKBKB kinase, which in turn leads to the degradation of NF-kappa-B inhibitors. In migrating astrocytes, forms a cytoplasmic complex with PARD6A and is recruited by CDC42 to function in the establishment of cell polarity along with the microtubule motor and dynein. In association with FEZ1, stimulates neuronal differentiation in PC12 cells. In the inflammatory response, is required for the T-helper 2 (Th2) differentiation process, including interleukin production, efficient activation of JAK1 and the subsequent phosphorylation and nuclear translocation of STAT6. May be involved in development of allergic airway inflammation (asthma), a process dependent on Th2 immune response. In the NF-kappa-B-mediated inflammatory response, can relieve SETD6-dependent repression of NF-kappa-B target genes by phosphorylating the RELA subunit at 'Ser-311'. Phosphorylates VAMP2 in vitro. Phosphorylates and activates LRRK1, which phosphorylates RAB proteins involved in intracellular trafficking. This Oryctolagus cuniculus (Rabbit) protein is Protein kinase C zeta type (PRKCZ).